Reading from the N-terminus, the 748-residue chain is Catalase-peroxidase (748 aa).

The segment at residues 96–229 (WHSAGTYRVA…LAAAHMGLIY (134 aa)) is a cross-link (tryptophyl-tyrosyl-methioninium (Trp-Tyr) (with M-255)). Residue His-97 is the Proton acceptor of the active site. The segment at residues 229 to 255 (YVNPEGPDGNPDPIAAAKDIRTTFGRM) is a cross-link (tryptophyl-tyrosyl-methioninium (Tyr-Met) (with W-96)). His-270 lines the heme b pocket.

Belongs to the peroxidase family. Peroxidase/catalase subfamily. Homodimer or homotetramer. Heme b is required as a cofactor. Post-translationally, formation of the three residue Trp-Tyr-Met cross-link is important for the catalase, but not the peroxidase activity of the enzyme.

The protein localises to the cytoplasm. The enzyme catalyses H2O2 + AH2 = A + 2 H2O. It catalyses the reaction 2 H2O2 = O2 + 2 H2O. Functionally, bifunctional enzyme with both catalase and broad-spectrum peroxidase activity. Plays a crucial role in oxidative stress response during infection. Acts as an antigen and elicits antibody response in P.marneffei-infected AIDS patients, healthy people working in mycological laboratory, and healthy people in an endemic area. The sequence is that of Catalase-peroxidase from Talaromyces marneffei (Penicillium marneffei).